The primary structure comprises 1307 residues: Contactin-associated protein like 5-3 (1307 aa).

An N-terminal signal peptide occupies residues 1–24 (MDFVPRLNSVLTLVLSGLWHFGLT). The Extracellular segment spans residues 25 to 1238 (ATNCDNCDDP…PLTNAVLSDS (1214 aa)). The 145-residue stretch at 31–175 (CDDPLASFLS…IGMRMEVYGC (145 aa)) folds into the F5/8 type C domain. Cys31 and Cys175 are joined by a disulfide. 2 Laminin G-like domains span residues 181-361 (VADF…TFSC) and 368-545 (PITF…IDLC). N-linked (GlcNAc...) asparagine glycosylation is present at Asn283. The cysteines at positions 330 and 361 are disulfide-linked. An N-linked (GlcNAc...) asparagine glycan is attached at Asn497. Disulfide bonds link Cys513-Cys545, Cys551-Cys562, Cys556-Cys571, and Cys573-Cys583. An EGF-like 1 domain is found at 547 to 584 (IKDRCLPNYCEHGGHCVQTWTTFYCNCSNTGYTGATCH). The region spanning 585–792 (DSIYEQSCEV…LRCYGDRHFW (208 aa)) is the Fibrinogen C-terminal domain. Asn600, Asn624, and Asn637 each carry an N-linked (GlcNAc...) asparagine glycan. A Laminin G-like 3 domain is found at 793–958 (NAVSFSTEAS…MVTSGVRPGC (166 aa)). 5 cysteine pairs are disulfide-bonded: Cys931–Cys958, Cys962–Cys975, Cys969–Cys984, Cys986–Cys996, and Cys1165–Cys1200. The 39-residue stretch at 959 to 997 (PGHCSSYGNNCHNGGKCVEKHNSYSCDCTKSPYEGPFCQ) folds into the EGF-like 2 domain. The region spanning 1019-1200 (PVSKNTSTSS…VQGSLREFSC (182 aa)) is the Laminin G-like 4 domain. Residues 1239–1259 (AVIGGVIAVVTFITFCVIGIM) traverse the membrane as a helical segment. At 1260–1307 (TRFLYQHKQSHCTSQKKEKEYSENLDSSFRHDIDLQSTTSKCKREYFI) the chain is on the cytoplasmic side.

The protein belongs to the neurexin family.

It is found in the membrane. In terms of biological role, may play a role in the correct development and proper functioning of the peripheral and central nervous system and be involved in cell adhesion and intercellular communication. The chain is Contactin-associated protein like 5-3 (Cntnap5c) from Rattus norvegicus (Rat).